The chain runs to 159 residues: NAD(P)H-quinone oxidoreductase subunit N (159 aa).

It belongs to the complex I NdhN subunit family. NDH-1 can be composed of about 15 different subunits; different subcomplexes with different compositions have been identified which probably have different functions.

The protein localises to the cell inner membrane. The catalysed reaction is a plastoquinone + NADH + (n+1) H(+)(in) = a plastoquinol + NAD(+) + n H(+)(out). It catalyses the reaction a plastoquinone + NADPH + (n+1) H(+)(in) = a plastoquinol + NADP(+) + n H(+)(out). In terms of biological role, NDH-1 shuttles electrons from an unknown electron donor, via FMN and iron-sulfur (Fe-S) centers, to quinones in the respiratory and/or the photosynthetic chain. The immediate electron acceptor for the enzyme in this species is believed to be plastoquinone. Couples the redox reaction to proton translocation, and thus conserves the redox energy in a proton gradient. Cyanobacterial NDH-1 also plays a role in inorganic carbon-concentration. This Gloeobacter violaceus (strain ATCC 29082 / PCC 7421) protein is NAD(P)H-quinone oxidoreductase subunit N.